Here is a 152-residue protein sequence, read N- to C-terminus: Small ribosomal subunit protein bS6 (152 aa).

Residues 96–152 (HEEGPSAMLQKRDRDDRGPREGGDRGPRREFGDRPPRRDGDFQRGPRPDRAPREDRA) are disordered.

This sequence belongs to the bacterial ribosomal protein bS6 family.

In terms of biological role, binds together with bS18 to 16S ribosomal RNA. This chain is Small ribosomal subunit protein bS6, found in Rhizobium etli (strain CIAT 652).